A 356-amino-acid chain; its full sequence is Dihydroorotate dehydrogenase (quinone) (356 aa).

FMN contacts are provided by residues Ala-67–Lys-71 and Thr-91. A substrate-binding site is contributed by Lys-71. Substrate is bound at residue Asn-116–Phe-120. Residues Asn-153 and Asn-186 each contribute to the FMN site. Substrate is bound at residue Asn-186. The active-site Nucleophile is Ser-189. Asn-191 provides a ligand contact to substrate. FMN contacts are provided by Lys-228 and Thr-256. Asn-257–Thr-258 is a binding site for substrate. FMN-binding positions include Gly-282, Gly-311, and Tyr-332–Thr-333.

Belongs to the dihydroorotate dehydrogenase family. Type 2 subfamily. In terms of assembly, monomer. The cofactor is FMN.

Its subcellular location is the cell membrane. The enzyme catalyses (S)-dihydroorotate + a quinone = orotate + a quinol. The protein operates within pyrimidine metabolism; UMP biosynthesis via de novo pathway; orotate from (S)-dihydroorotate (quinone route): step 1/1. Its function is as follows. Catalyzes the conversion of dihydroorotate to orotate with quinone as electron acceptor. The sequence is that of Dihydroorotate dehydrogenase (quinone) from Pseudarthrobacter chlorophenolicus (strain ATCC 700700 / DSM 12829 / CIP 107037 / JCM 12360 / KCTC 9906 / NCIMB 13794 / A6) (Arthrobacter chlorophenolicus).